A 345-amino-acid polypeptide reads, in one-letter code: N-acetyl-gamma-glutamyl-phosphate reductase (345 aa).

Residue C149 is part of the active site.

It belongs to the NAGSA dehydrogenase family. Type 1 subfamily.

It localises to the cytoplasm. It carries out the reaction N-acetyl-L-glutamate 5-semialdehyde + phosphate + NADP(+) = N-acetyl-L-glutamyl 5-phosphate + NADPH + H(+). Its pathway is amino-acid biosynthesis; L-arginine biosynthesis; N(2)-acetyl-L-ornithine from L-glutamate: step 3/4. Functionally, catalyzes the NADPH-dependent reduction of N-acetyl-5-glutamyl phosphate to yield N-acetyl-L-glutamate 5-semialdehyde. In Geobacillus sp. (strain WCH70), this protein is N-acetyl-gamma-glutamyl-phosphate reductase.